Consider the following 38-residue polypeptide: Large ribosomal subunit protein bL36 (38 aa).

This sequence belongs to the bacterial ribosomal protein bL36 family.

This is Large ribosomal subunit protein bL36 from Psychrobacter cryohalolentis (strain ATCC BAA-1226 / DSM 17306 / VKM B-2378 / K5).